The chain runs to 185 residues: Probable dehydrin LEA (185 aa).

Basic and acidic residues-rich tracts occupy residues 1 to 10 (MADLRDEKGN) and 44 to 55 (QHKESTTSDIAE). Residues 1 to 185 (MADLRDEKGN…LPGHHNHNHP (185 aa)) form a disordered region. Over residues 67–94 (AAAPAGAGAATAATATGVSAGTGATTTG) the composition is skewed to low complexity. Basic and acidic residues predominate over residues 130–146 (KEKIKEKFGSGKHKDEQ). Over residues 147-159 (TPATATTTGPATT) the composition is skewed to low complexity. The span at 161–177 (QPHEKKGILEKIKDKLP) shows a compositional bias: basic and acidic residues.

This sequence belongs to the plant dehydrin family.

This is Probable dehydrin LEA (LEA) from Arabidopsis thaliana (Mouse-ear cress).